The chain runs to 1128 residues: Exportin-6 (1128 aa).

The Importin N-terminal domain occupies 31 to 97 (IEELLNSFAG…RSCLPKLLLS (67 aa)).

Belongs to the exportin family.

It localises to the nucleus. The protein resides in the cytoplasm. Its function is as follows. Mediates the nuclear export of actin and profilin-actin complexes in somatic cells. This is Exportin-6 (xpo6) from Danio rerio (Zebrafish).